The following is a 252-amino-acid chain: MAAVTKPLVLITGANQGLGFATAQQLASTGQYNLLVAARSQEKAEGAVKQLESSTNSSLTPIVIDLDQDESITAAAKFVEERFGSLDILINNAGINRSSDPNATLRESYRAVFETNVFGVAVMTATFLPLLRASKYHDRRIVNVTSGLGQIGIAYSPTSEYSAKIWELPIYRSSKSAINMISAVDAVSLEKENILVVLAAPGFCRTNFGGGQGVKSAEEGARPIVRAATEGSPKELFGKLVDDENTLVEFGW.

Residues Leu-18, Asp-65, Asn-92, Tyr-171, Lys-175, and Thr-206 each coordinate NADP(+). Tyr-171 (proton acceptor) is an active-site residue. The active-site Proton donor is the Tyr-171. Lys-175 acts as the Lowers pKa of active site Tyr in catalysis.

The protein belongs to the short-chain dehydrogenases/reductases (SDR) family.

Its function is as follows. Highly reducing polyketide synthase; part of the gene cluster that mediates the biosynthesis of annullatin D, an alkylated aromatic polyketide with a fused dihydrobenzofuran lactone ring system that exhibits potent agonistic activities toward the cannabinoid receptors. AnuI does not seem to play a role within the pathway. The annullatin backbone 2-hydroxymethyl-3-pentylphenol is assembled from one acetyl-CoA starter unit and 5 malonyl-CoA elongation units by cooperation of the highly reducing polyketide synthase anuA, the short-chain dehydrogenase anuB and the oxidoreductase anuC, before being hydroxylated at the C-5 alkyl chain by the cytochrome P450 monooxygenase anuE to form (8S)-annullatin E. The prenyltransferase anuH subsequently installs one isoprenyl group at the benzene ring to form (8S)-annullatin J. Enzymatic or nonenzymatic dihydro-benzofuran ring formation between the prenyl and the phenolic hydroxyl groups in (8S)-annullatin J results in two diastereomers (2S,9S)-annullatin H and compound 12. The intermediate (2S,9S)-annullatin H is then converted to (2S,9S)-annullatin D by the FAD-linked oxidoreductase anuG-catalyzed five-member lactone ring formation. The isomer 12 acts as a substrate for the short-chain dehydrogenase anuF and is oxidized to (2R)-annullatin F, which is subsequently acetylated by an acetyltransferase leading to (2R)-annullatin G formation. The remaining enzymes identified within the cluster, anuD, anuI and anuJ, seem not to be involved in annullatin biosynthesis. This is Short-chain dehydrogenase anuI from Penicillium roqueforti (strain FM164).